Consider the following 663-residue polypeptide: RING finger protein 145 (663 aa).

14 helical membrane-spanning segments follow: residues 53-73 (YLAL…LTLP), 77-97 (LVQL…HQIS), 123-143 (FTTA…VMKT), 146-166 (IWLF…VPLE), 168-188 (IVII…YFLG), 205-222 (LVQV…MSLW), 225-245 (LVVP…QIYS), 275-295 (YSLL…LTLC), 316-336 (TEGV…LQVV), 340-360 (FLLS…MLEI), 384-404 (SLCL…CQFF), 410-430 (LLII…TLFI), 460-480 (LLEF…TIFG), and 482-502 (WTVM…WLRA). The YLYF motif signature appears at 81–84 (YLYF). Cys537 is a catalytic residue. The segment at 537-575 (CAICYQDMKSAVITPCSHFFHAGCLKKWLYVQDTCPLCH) adopts an RING-type; atypical zinc-finger fold. A disordered region spans residues 587 to 663 (LGTEAAPQPP…EGEVCPVESA (77 aa)). Polar residues predominate over residues 619-628 (GTGTQEGSGD).

Interacts (via YLYF motif) with INSIG1 and INSIG2.

The protein resides in the endoplasmic reticulum membrane. It carries out the reaction S-ubiquitinyl-[E2 ubiquitin-conjugating enzyme]-L-cysteine + [acceptor protein]-L-lysine = [E2 ubiquitin-conjugating enzyme]-L-cysteine + N(6)-ubiquitinyl-[acceptor protein]-L-lysine.. In terms of biological role, E3 ubiquitin ligase that catalyzes the direct transfer of ubiquitin from E2 ubiquitin-conjugating enzyme to a specific substrate. In response to bacterial infection, negatively regulates the phagocyte oxidative burst by controlling the turnover of the NADPH oxidase complex subunits. Promotes monoubiquitination of CYBA and 'Lys-48'-linked polyubiquitination and degradation of CYBB NADPH oxidase catalytic subunits, both essential for the generation of antimicrobial reactive oxygen species. Involved in the maintenance of cholesterol homeostasis. In response to high sterol concentrations ubiquitinates HMGCR, a rate-limiting enzyme in cholesterol biosynthesis, and targets it for degradation. The interaction with INSIG1 is required for this function. In addition, triggers ubiquitination of SCAP, likely inhibiting its transport to the Golgi apparatus and the subsequent processing/maturation of SREBPF2, ultimately down-regulating cholesterol biosynthesis. The chain is RING finger protein 145 from Mus musculus (Mouse).